The sequence spans 983 residues: Inner tegument protein (983 aa).

Residues 474–983 (LNVNTHFAVQ…TSVSLPPASP (510 aa)) are interaction with large tegument protein. A disordered region spans residues 901–932 (APWESAPQPPRLRMTPDTDHEESTAGATSVPE). Basic and acidic residues predominate over residues 914–923 (MTPDTDHEES).

This sequence belongs to the herpesviridae inner tegument protein family. Interacts (via C-terminus) with the large tegument protein/LTP (via N-terminus).

The protein resides in the virion tegument. It is found in the host cytoplasm. Its subcellular location is the host nucleus. The protein localises to the host Golgi apparatus. It localises to the host trans-Golgi network. Plays an essential role in cytoplasmic secondary envelopment during viral egress. Interacts with the capsid via the large tegument protein/LTP and participates in its transport to the host trans-Golgi network (TGN) where secondary envelopment occurs. Modulates tegumentation and capsid accumulation at the viral assembly complex. The sequence is that of Inner tegument protein (UL47) from Homo sapiens (Human).